The primary structure comprises 192 residues: Ion-translocating oxidoreductase complex subunit B (192 aa).

The tract at residues 1–26 (MTAIWIAIAALSALALAFGLVLGYAS) is hydrophobic. The 60-residue stretch at 32–91 (ENDPIVEEVEAMLPQSQCGQCGYPGCRPYAEAVSLNGESINKCGPGGEAMMLKLAEKLNV) folds into the 4Fe-4S domain. [4Fe-4S] cluster-binding residues include Cys49, Cys52, Cys57, Cys74, Cys117, Cys120, Cys123, Cys127, Cys147, Cys150, Cys153, and Cys157. 4Fe-4S ferredoxin-type domains lie at 108-137 (HVAW…GSTK) and 138-167 (AVHT…LRPI).

The protein belongs to the 4Fe4S bacterial-type ferredoxin family. RnfB subfamily. In terms of assembly, the complex is composed of six subunits: RnfA, RnfB, RnfC, RnfD, RnfE and RnfG. The cofactor is [4Fe-4S] cluster.

It is found in the cell inner membrane. Part of a membrane-bound complex that couples electron transfer with translocation of ions across the membrane. In Pectobacterium atrosepticum (strain SCRI 1043 / ATCC BAA-672) (Erwinia carotovora subsp. atroseptica), this protein is Ion-translocating oxidoreductase complex subunit B.